We begin with the raw amino-acid sequence, 303 residues long: MQIFVACPRGFCAGVERAIETVEIAIRRYPEKKIFVYHEIVHNSRVIQDFKARGVDFIEDITKVEPKSVLIFSAHGVSEEIEKYVKSLDLVLVDATCPLVSKIHREVQRFEKEGFIILVIGNRNHAEIIGTVGRTKTQAYIVQDPEDIDNLPSITGKLAYVTQSTLALEYTSTMINKIKEKFPNVVGRSDVCYATQNRQEAVKALAKEVDLMLIVGSTNSSNSRNLMQVSSKICQKAFLIDNYNEVEPDWFEGVDRVGISSGASAPEILVQDLVSFLKKRFPSAEVSDFKFKEEKVQFKLPII.

Cysteine 12 serves as a coordination point for [4Fe-4S] cluster. Residues histidine 42 and histidine 75 each coordinate (2E)-4-hydroxy-3-methylbut-2-enyl diphosphate. The dimethylallyl diphosphate site is built by histidine 42 and histidine 75. Residues histidine 42 and histidine 75 each contribute to the isopentenyl diphosphate site. Cysteine 97 contributes to the [4Fe-4S] cluster binding site. Histidine 125 contributes to the (2E)-4-hydroxy-3-methylbut-2-enyl diphosphate binding site. Histidine 125 contributes to the dimethylallyl diphosphate binding site. Histidine 125 lines the isopentenyl diphosphate pocket. Residue glutamate 127 is the Proton donor of the active site. Position 164 (serine 164) interacts with (2E)-4-hydroxy-3-methylbut-2-enyl diphosphate. Position 192 (cysteine 192) interacts with [4Fe-4S] cluster. (2E)-4-hydroxy-3-methylbut-2-enyl diphosphate-binding residues include serine 220, serine 221, asparagine 222, and serine 264. Residues serine 220, serine 221, asparagine 222, and serine 264 each coordinate dimethylallyl diphosphate. The isopentenyl diphosphate site is built by serine 220, serine 221, asparagine 222, and serine 264.

This sequence belongs to the IspH family. [4Fe-4S] cluster serves as cofactor.

The enzyme catalyses isopentenyl diphosphate + 2 oxidized [2Fe-2S]-[ferredoxin] + H2O = (2E)-4-hydroxy-3-methylbut-2-enyl diphosphate + 2 reduced [2Fe-2S]-[ferredoxin] + 2 H(+). It catalyses the reaction dimethylallyl diphosphate + 2 oxidized [2Fe-2S]-[ferredoxin] + H2O = (2E)-4-hydroxy-3-methylbut-2-enyl diphosphate + 2 reduced [2Fe-2S]-[ferredoxin] + 2 H(+). The protein operates within isoprenoid biosynthesis; dimethylallyl diphosphate biosynthesis; dimethylallyl diphosphate from (2E)-4-hydroxy-3-methylbutenyl diphosphate: step 1/1. It participates in isoprenoid biosynthesis; isopentenyl diphosphate biosynthesis via DXP pathway; isopentenyl diphosphate from 1-deoxy-D-xylulose 5-phosphate: step 6/6. In terms of biological role, catalyzes the conversion of 1-hydroxy-2-methyl-2-(E)-butenyl 4-diphosphate (HMBPP) into a mixture of isopentenyl diphosphate (IPP) and dimethylallyl diphosphate (DMAPP). Acts in the terminal step of the DOXP/MEP pathway for isoprenoid precursor biosynthesis. The sequence is that of 4-hydroxy-3-methylbut-2-enyl diphosphate reductase from Neorickettsia sennetsu (strain ATCC VR-367 / Miyayama) (Ehrlichia sennetsu).